A 718-amino-acid chain; its full sequence is Mitochondrial potassium channel ATP-binding subunit (718 aa).

Residues 1 to 25 constitute a mitochondrion transit peptide; the sequence is MLVHLFRVGIRGGPFPGRLLPPLRF. 3 helical membrane-spanning segments follow: residues 128-148, 179-199, and 279-299; these read LLVL…NVQI, THLL…LVLL, and LLLM…GSGL. The ABC transmembrane type-1 domain maps to 133 to 420; the sequence is VAVVLALGAA…LSVLFGQVVR (288 aa). The 238-residue stretch at 455 to 692 folds into the ABC transporter domain; that stretch reads VTFQNVCFSY…GGLYAELIRR (238 aa). An ATP-binding site is contributed by 490-497; it reads GQSGGGKT. Residues 697–718 are disordered; sequence APRTAAPLPKKPEGPRNHQHKS.

It belongs to the ABC transporter superfamily. ABCB family. Multidrug resistance exporter (TC 3.A.1.201) subfamily. In terms of assembly, the mitochondrial potassium channel (mitoK(ATP)) is composed of 4 subunits of CCDC51/MITOK and 4 subunits of ABCB8/MITOSUR. Physically interacts with PAAT. Interacts with Neuropilin-1 (NRP1) in mitochondria.

The protein resides in the mitochondrion inner membrane. Channel activity inhibited by ATP via ABCB8/MITOSUR subunit. In terms of biological role, ATP-binding subunit of the mitochondrial ATP-gated potassium channel (mitoK(ATP)). Together with pore-forming subunit CCDC51/MITOK of the mitoK(ATP) channel, mediates ATP-dependent potassium currents across the mitochondrial inner membrane. An increase in ATP intracellular levels closes the channel, inhibiting K(+) transport, whereas a decrease in ATP levels enhances K(+) uptake in the mitochondrial matrix. Plays a role in mitochondrial iron transport. Required for maintenance of normal cardiac function, possibly by influencing mitochondrial iron export and regulating the maturation of cytosolic iron sulfur cluster-containing enzymes. The sequence is that of Mitochondrial potassium channel ATP-binding subunit (ABCB8) from Pongo abelii (Sumatran orangutan).